Consider the following 192-residue polypeptide: Protein GrpE (192 aa).

The segment covering 1–20 (MEERNEQVVEEVKEEVKEAQ) has biased composition (basic and acidic residues). A disordered region spans residues 1–34 (MEERNEQVVEEVKEEVKEAQVEEAVTSEDSEETV). The segment covering 25–34 (VTSEDSEETV) has biased composition (acidic residues).

This sequence belongs to the GrpE family. Homodimer.

It is found in the cytoplasm. Its function is as follows. Participates actively in the response to hyperosmotic and heat shock by preventing the aggregation of stress-denatured proteins, in association with DnaK and GrpE. It is the nucleotide exchange factor for DnaK and may function as a thermosensor. Unfolded proteins bind initially to DnaJ; upon interaction with the DnaJ-bound protein, DnaK hydrolyzes its bound ATP, resulting in the formation of a stable complex. GrpE releases ADP from DnaK; ATP binding to DnaK triggers the release of the substrate protein, thus completing the reaction cycle. Several rounds of ATP-dependent interactions between DnaJ, DnaK and GrpE are required for fully efficient folding. The protein is Protein GrpE of Bacillus cereus (strain AH187).